We begin with the raw amino-acid sequence, 492 residues long: 2-succinylbenzoate--CoA ligase (492 aa).

Belongs to the ATP-dependent AMP-binding enzyme family. MenE subfamily.

It catalyses the reaction 2-succinylbenzoate + ATP + CoA = 2-succinylbenzoyl-CoA + AMP + diphosphate. It functions in the pathway quinol/quinone metabolism; 1,4-dihydroxy-2-naphthoate biosynthesis; 1,4-dihydroxy-2-naphthoate from chorismate: step 5/7. The protein operates within quinol/quinone metabolism; menaquinone biosynthesis. Converts 2-succinylbenzoate (OSB) to 2-succinylbenzoyl-CoA (OSB-CoA). The protein is 2-succinylbenzoate--CoA ligase of Staphylococcus aureus (strain bovine RF122 / ET3-1).